The primary structure comprises 138 residues: Cysteine desulfuration protein SufE (138 aa).

Cysteine 51 (cysteine persulfide intermediate) is an active-site residue.

Belongs to the SufE family. Homodimer. Interacts with SufS.

The protein resides in the cytoplasm. Its pathway is cofactor biosynthesis; iron-sulfur cluster biosynthesis. Its function is as follows. Participates in cysteine desulfuration mediated by SufS. Cysteine desulfuration mobilizes sulfur from L-cysteine to yield L-alanine and constitutes an essential step in sulfur metabolism for biosynthesis of a variety of sulfur-containing biomolecules. Functions as a sulfur acceptor for SufS, by mediating the direct transfer of the sulfur atom from the S-sulfanylcysteine of SufS, an intermediate product of cysteine desulfuration process. The polypeptide is Cysteine desulfuration protein SufE (Escherichia coli O6:K15:H31 (strain 536 / UPEC)).